Here is a 100-residue protein sequence, read N- to C-terminus: Urease subunit gamma (100 aa).

The protein belongs to the urease gamma subunit family. In terms of assembly, heterotrimer of UreA (gamma), UreB (beta) and UreC (alpha) subunits. Three heterotrimers associate to form the active enzyme.

The protein resides in the cytoplasm. The enzyme catalyses urea + 2 H2O + H(+) = hydrogencarbonate + 2 NH4(+). The protein operates within nitrogen metabolism; urea degradation; CO(2) and NH(3) from urea (urease route): step 1/1. The polypeptide is Urease subunit gamma (Bordetella bronchiseptica (strain ATCC BAA-588 / NCTC 13252 / RB50) (Alcaligenes bronchisepticus)).